The primary structure comprises 233 residues: Octanoyltransferase (233 aa).

One can recognise a BPL/LPL catalytic domain in the interval 33 to 216 (GRAQDTVILL…HLVRALSSNG (184 aa)). Residues 71 to 78 (RGGRITWH), 146 to 148 (AIG), and 159 to 161 (GFA) each bind substrate. The active-site Acyl-thioester intermediate is C177.

This sequence belongs to the LipB family.

It is found in the cytoplasm. The catalysed reaction is octanoyl-[ACP] + L-lysyl-[protein] = N(6)-octanoyl-L-lysyl-[protein] + holo-[ACP] + H(+). The protein operates within protein modification; protein lipoylation via endogenous pathway; protein N(6)-(lipoyl)lysine from octanoyl-[acyl-carrier-protein]: step 1/2. In terms of biological role, catalyzes the transfer of endogenously produced octanoic acid from octanoyl-acyl-carrier-protein onto the lipoyl domains of lipoate-dependent enzymes. Lipoyl-ACP can also act as a substrate although octanoyl-ACP is likely to be the physiological substrate. This chain is Octanoyltransferase, found in Clavibacter michiganensis subsp. michiganensis (strain NCPPB 382).